Here is a 532-residue protein sequence, read N- to C-terminus: Probable cytochrome c oxidase subunit 1 (532 aa).

Helical transmembrane passes span 33–53 (IMYI…SLLF), 74–94 (VLIT…ALFG), 95–115 (GFGN…FPRL), 118–138 (ISFW…FVDG), 163–183 (MAIF…INLI), 200–220 (PLFV…MPVL), 252–272 (LFWF…FGIV), and 284–304 (IFGY…GFIV). Residue H79 coordinates Fe(II)-heme a. 2 residues coordinate Cu cation: H258 and Y262. Residues H307 and H308 each contribute to the Cu cation site. Helical transmembrane passes span 318 to 338 (ALIY…IKIF) and 355 to 375 (MLFS…GIIL). H393 lines the heme a3 pocket. 3 helical membrane-spanning segments follow: residues 394–414 (FHYT…YYWF), 431–451 (FWIT…LGLA), and 473–493 (IGAG…FYTL). Fe(II)-heme a is bound at residue H395.

The protein belongs to the heme-copper respiratory oxidase family.

It is found in the cell membrane. The catalysed reaction is 4 Fe(II)-[cytochrome c] + O2 + 8 H(+)(in) = 4 Fe(III)-[cytochrome c] + 2 H2O + 4 H(+)(out). The protein operates within energy metabolism; oxidative phosphorylation. Functionally, cytochrome c oxidase is the component of the respiratory chain that catalyzes the reduction of oxygen to water. Subunits 1-3 form the functional core of the enzyme complex. CO I is the catalytic subunit of the enzyme. Electrons originating in cytochrome c are transferred via the copper A center of subunit 2 and heme A of subunit 1 to the bimetallic center formed by heme A3 and copper B. The polypeptide is Probable cytochrome c oxidase subunit 1 (ctaD) (Rickettsia bellii (strain RML369-C)).